Here is a 278-residue protein sequence, read N- to C-terminus: Large ribosomal subunit protein uL2 (278 aa).

The interval 214–278 is disordered; the sequence is WLGKRPHNRG…IMRSRHQRKS (65 aa).

This sequence belongs to the universal ribosomal protein uL2 family. Part of the 50S ribosomal subunit. Forms a bridge to the 30S subunit in the 70S ribosome.

One of the primary rRNA binding proteins. Required for association of the 30S and 50S subunits to form the 70S ribosome, for tRNA binding and peptide bond formation. It has been suggested to have peptidyltransferase activity; this is somewhat controversial. Makes several contacts with the 16S rRNA in the 70S ribosome. The sequence is that of Large ribosomal subunit protein uL2 from Chelativorans sp. (strain BNC1).